The chain runs to 729 residues: Beta-galactosidase 4 (729 aa).

Residues 1 to 35 form the signal peptide; the sequence is MAPAPTPAAAAGRRVAVLAAALVAASLAASVGVAN. Glu-194 (proton donor) is an active-site residue. Catalysis depends on Glu-263, which acts as the Nucleophile.

Belongs to the glycosyl hydrolase 35 family.

Its subcellular location is the secreted. The protein resides in the extracellular space. It localises to the apoplast. It catalyses the reaction Hydrolysis of terminal non-reducing beta-D-galactose residues in beta-D-galactosides.. The sequence is that of Beta-galactosidase 4 from Oryza sativa subsp. japonica (Rice).